Consider the following 508-residue polypeptide: Photosystem II CP47 reaction center protein (508 aa).

6 helical membrane passes run 21-36 (AVHIMHTALVAGWAGS), 101-115 (IVFSGLCFLAAIWHW), 140-156 (GIHLFLAGLACFGFGAF), 203-218 (IAAGTLGILAGLFHLS), 237-252 (VLSSSIAAVFFAAFVV), and 457-472 (SFALLFFFGHIWHGAR).

It belongs to the PsbB/PsbC family. PsbB subfamily. PSII is composed of 1 copy each of membrane proteins PsbA, PsbB, PsbC, PsbD, PsbE, PsbF, PsbH, PsbI, PsbJ, PsbK, PsbL, PsbM, PsbT, PsbX, PsbY, PsbZ, Psb30/Ycf12, at least 3 peripheral proteins of the oxygen-evolving complex and a large number of cofactors. It forms dimeric complexes. The cofactor is Binds multiple chlorophylls. PSII binds additional chlorophylls, carotenoids and specific lipids..

It localises to the plastid. The protein localises to the chloroplast thylakoid membrane. Functionally, one of the components of the core complex of photosystem II (PSII). It binds chlorophyll and helps catalyze the primary light-induced photochemical processes of PSII. PSII is a light-driven water:plastoquinone oxidoreductase, using light energy to abstract electrons from H(2)O, generating O(2) and a proton gradient subsequently used for ATP formation. The polypeptide is Photosystem II CP47 reaction center protein (Daucus carota (Wild carrot)).